The following is a 266-amino-acid chain: Glucosamine-6-phosphate deaminase (266 aa).

Aspartate 72 functions as the Proton acceptor; for enolization step in the catalytic mechanism. Catalysis depends on aspartate 141, which acts as the For ring-opening step. The active-site Proton acceptor; for ring-opening step is the histidine 143. Glutamate 148 (for ring-opening step) is an active-site residue.

It belongs to the glucosamine/galactosamine-6-phosphate isomerase family. NagB subfamily. Homohexamer.

The enzyme catalyses alpha-D-glucosamine 6-phosphate + H2O = beta-D-fructose 6-phosphate + NH4(+). The protein operates within amino-sugar metabolism; N-acetylneuraminate degradation; D-fructose 6-phosphate from N-acetylneuraminate: step 5/5. Allosterically activated by N-acetylglucosamine 6-phosphate (GlcNAc6P). Functionally, catalyzes the reversible isomerization-deamination of glucosamine 6-phosphate (GlcN6P) to form fructose 6-phosphate (Fru6P) and ammonium ion. In Aliivibrio fischeri (strain ATCC 700601 / ES114) (Vibrio fischeri), this protein is Glucosamine-6-phosphate deaminase.